Here is a 235-residue protein sequence, read N- to C-terminus: Ion-translocating oxidoreductase complex subunit E (235 aa).

5 helical membrane-spanning segments follow: residues 63–83 (LGLS…ISLF), 93–113 (IPIY…LMNA), 117–137 (TLYQ…IIIG), 152–172 (IWDG…LGAL), and 206–226 (SFLL…LLAI).

The protein belongs to the NqrDE/RnfAE family. As to quaternary structure, the complex is composed of six subunits: RnfA, RnfB, RnfC, RnfD, RnfE and RnfG.

It is found in the cell inner membrane. Part of a membrane-bound complex that couples electron transfer with translocation of ions across the membrane. The chain is Ion-translocating oxidoreductase complex subunit E from Haemophilus influenzae (strain PittEE).